Reading from the N-terminus, the 128-residue chain is Glycine cleavage system H protein 2 (128 aa).

Positions 24-105 (TVTVGISDHA…PYSAWIFKVK (82 aa)) constitute a Lipoyl-binding domain. An N6-lipoyllysine modification is found at lysine 65.

Belongs to the GcvH family. In terms of assembly, the glycine cleavage system is composed of four proteins: P, T, L and H. Requires (R)-lipoate as cofactor.

The glycine cleavage system catalyzes the degradation of glycine. The H protein shuttles the methylamine group of glycine from the P protein to the T protein. In Pseudomonas syringae pv. tomato (strain ATCC BAA-871 / DC3000), this protein is Glycine cleavage system H protein 2.